An 867-amino-acid chain; its full sequence is Putative RNA-directed RNA polymerase (867 aa).

In terms of domain architecture, RdRp catalytic spans 561–676 (PVAIGVDASR…ITDRANEKLF (116 aa)).

It belongs to the luteoviruses RNA polymerase family.

The catalysed reaction is RNA(n) + a ribonucleoside 5'-triphosphate = RNA(n+1) + diphosphate. In terms of biological role, probable polymerase. The sequence is that of Putative RNA-directed RNA polymerase from Barley yellow dwarf virus (isolate P-PAV) (BYDV).